A 265-amino-acid polypeptide reads, in one-letter code: Methylthioribulose-1-phosphate dehydratase (265 aa).

A substrate-binding site is contributed by C116. Zn(2+) contacts are provided by H134 and H136. E159 serves as the catalytic Proton donor/acceptor. H224 is a binding site for Zn(2+).

This sequence belongs to the aldolase class II family. MtnB subfamily. It depends on Zn(2+) as a cofactor.

Its subcellular location is the cytoplasm. It carries out the reaction 5-(methylsulfanyl)-D-ribulose 1-phosphate = 5-methylsulfanyl-2,3-dioxopentyl phosphate + H2O. The protein operates within amino-acid biosynthesis; L-methionine biosynthesis via salvage pathway; L-methionine from S-methyl-5-thio-alpha-D-ribose 1-phosphate: step 2/6. Its function is as follows. Catalyzes the dehydration of methylthioribulose-1-phosphate (MTRu-1-P) into 2,3-diketo-5-methylthiopentyl-1-phosphate (DK-MTP-1-P). This Debaryomyces hansenii (strain ATCC 36239 / CBS 767 / BCRC 21394 / JCM 1990 / NBRC 0083 / IGC 2968) (Yeast) protein is Methylthioribulose-1-phosphate dehydratase.